The sequence spans 458 residues: Histidine--tRNA ligase (458 aa).

The protein belongs to the class-II aminoacyl-tRNA synthetase family. In terms of assembly, homodimer.

The protein resides in the cytoplasm. It carries out the reaction tRNA(His) + L-histidine + ATP = L-histidyl-tRNA(His) + AMP + diphosphate + H(+). The polypeptide is Histidine--tRNA ligase (Azobacteroides pseudotrichonymphae genomovar. CFP2).